Here is a 141-residue protein sequence, read N- to C-terminus: Nucleoside diphosphate kinase (141 aa).

Positions 11, 59, 87, 93, 104, and 114 each coordinate ATP. H117 functions as the Pros-phosphohistidine intermediate in the catalytic mechanism.

It belongs to the NDK family. As to quaternary structure, homotetramer. Mg(2+) serves as cofactor.

It localises to the cytoplasm. It catalyses the reaction a 2'-deoxyribonucleoside 5'-diphosphate + ATP = a 2'-deoxyribonucleoside 5'-triphosphate + ADP. The enzyme catalyses a ribonucleoside 5'-diphosphate + ATP = a ribonucleoside 5'-triphosphate + ADP. Its function is as follows. Major role in the synthesis of nucleoside triphosphates other than ATP. The ATP gamma phosphate is transferred to the NDP beta phosphate via a ping-pong mechanism, using a phosphorylated active-site intermediate. This Burkholderia thailandensis (strain ATCC 700388 / DSM 13276 / CCUG 48851 / CIP 106301 / E264) protein is Nucleoside diphosphate kinase.